A 503-amino-acid chain; its full sequence is Capsanthin/capsorubin synthase, chromoplastic (503 aa).

88-117 (VIIIGTGPAGLRLAEQVSSRHSVKVCCVDP) contributes to the NAD(+) binding site.

Belongs to the lycopene cyclase family.

Its subcellular location is the plastid. It localises to the chromoplast. It catalyses the reaction all-trans-violaxanthin = all-trans-capsorubin. The catalysed reaction is all-trans-antheraxanthin = all-trans-capsanthin. It participates in carotenoid biosynthesis; capsanthin biosynthesis; capsanthin from antheraxanthin: step 1/1. The protein operates within carotenoid biosynthesis; capsorubin biosynthesis; capsorubin from violaxanthin: step 1/1. Its function is as follows. Catalyzes the conversion of the ubiquitous 5,6-epoxycarotenoids, antheraxanthin and violaxanthin, into capsanthin and capsorubin, respectively. This chain is Capsanthin/capsorubin synthase, chromoplastic (CCS), found in Citrus sinensis (Sweet orange).